Consider the following 496-residue polypeptide: Proline--tRNA ligase (496 aa).

Belongs to the class-II aminoacyl-tRNA synthetase family. ProS type 3 subfamily. In terms of assembly, homodimer.

Its subcellular location is the cytoplasm. It catalyses the reaction tRNA(Pro) + L-proline + ATP = L-prolyl-tRNA(Pro) + AMP + diphosphate. Its function is as follows. Catalyzes the attachment of proline to tRNA(Pro) in a two-step reaction: proline is first activated by ATP to form Pro-AMP and then transferred to the acceptor end of tRNA(Pro). This chain is Proline--tRNA ligase, found in Phocaeicola vulgatus (strain ATCC 8482 / DSM 1447 / JCM 5826 / CCUG 4940 / NBRC 14291 / NCTC 11154) (Bacteroides vulgatus).